Here is a 127-residue protein sequence, read N- to C-terminus: Oleate-induced peroxisomal protein POX18 (127 aa).

One can recognise an SCP2 domain in the interval 14 to 119 (FKELHEGLAD…KATAIESVFK (106 aa)). A hydrophobic region spans residues 33-41 (AVNAVIVIT). Residues 43–52 (KNKEGKEQSW) are hydrophilic.

Monomer.

It localises to the peroxisome. The protein operates within lipid metabolism; fatty acid metabolism. Functionally, is involved in beta-oxidation of long-chain fatty acids. Its exact function is unknown, but possesses a nonspecific lipid-transfer activity, despite the absence of a cysteine residue thought to be essential for the activity of its mammalian counterparts. The sequence is that of Oleate-induced peroxisomal protein POX18 (POX18) from Candida maltosa (Yeast).